The chain runs to 347 residues: Holliday junction branch migration complex subunit RuvB (347 aa).

The tract at residues 4–186 is large ATPase domain (RuvB-L); sequence INEYGSERIV…FGMIFEMNFY (183 aa). ATP contacts are provided by residues Leu-25, Arg-26, Gly-67, Lys-70, Thr-71, Thr-72, 133 to 135, Arg-176, Tyr-186, and Arg-223; that span reads EDF. Thr-71 is a binding site for Mg(2+). The interval 187–257 is small ATPAse domain (RuvB-S); that stretch reads TQEELKMIIT…IVEEVMRLLG (71 aa). The tract at residues 260–347 is head domain (RuvB-H); that stretch reads EFGLDEMDRK…GLFDGFGNIE (88 aa). 2 residues coordinate DNA: Arg-315 and Arg-320.

Belongs to the RuvB family. In terms of assembly, homohexamer. Forms an RuvA(8)-RuvB(12)-Holliday junction (HJ) complex. HJ DNA is sandwiched between 2 RuvA tetramers; dsDNA enters through RuvA and exits via RuvB. An RuvB hexamer assembles on each DNA strand where it exits the tetramer. Each RuvB hexamer is contacted by two RuvA subunits (via domain III) on 2 adjacent RuvB subunits; this complex drives branch migration. In the full resolvosome a probable DNA-RuvA(4)-RuvB(12)-RuvC(2) complex forms which resolves the HJ.

It localises to the cytoplasm. The catalysed reaction is ATP + H2O = ADP + phosphate + H(+). In terms of biological role, the RuvA-RuvB-RuvC complex processes Holliday junction (HJ) DNA during genetic recombination and DNA repair, while the RuvA-RuvB complex plays an important role in the rescue of blocked DNA replication forks via replication fork reversal (RFR). RuvA specifically binds to HJ cruciform DNA, conferring on it an open structure. The RuvB hexamer acts as an ATP-dependent pump, pulling dsDNA into and through the RuvAB complex. RuvB forms 2 homohexamers on either side of HJ DNA bound by 1 or 2 RuvA tetramers; 4 subunits per hexamer contact DNA at a time. Coordinated motions by a converter formed by DNA-disengaged RuvB subunits stimulates ATP hydrolysis and nucleotide exchange. Immobilization of the converter enables RuvB to convert the ATP-contained energy into a lever motion, pulling 2 nucleotides of DNA out of the RuvA tetramer per ATP hydrolyzed, thus driving DNA branch migration. The RuvB motors rotate together with the DNA substrate, which together with the progressing nucleotide cycle form the mechanistic basis for DNA recombination by continuous HJ branch migration. Branch migration allows RuvC to scan DNA until it finds its consensus sequence, where it cleaves and resolves cruciform DNA. The sequence is that of Holliday junction branch migration complex subunit RuvB from Fervidobacterium nodosum (strain ATCC 35602 / DSM 5306 / Rt17-B1).